Consider the following 246-residue polypeptide: UDP-2,3-diacylglucosamine hydrolase (246 aa).

Asp-8, His-10, Asp-41, Asn-79, and His-114 together coordinate Mn(2+). Substrate is bound at residue 79–80 (NR). Substrate-binding residues include Asp-122, Lys-164, Lys-167, and His-195. Residues His-195 and His-197 each coordinate Mn(2+).

It belongs to the LpxH family. The cofactor is Mn(2+).

The protein resides in the cell inner membrane. The catalysed reaction is UDP-2-N,3-O-bis[(3R)-3-hydroxytetradecanoyl]-alpha-D-glucosamine + H2O = 2-N,3-O-bis[(3R)-3-hydroxytetradecanoyl]-alpha-D-glucosaminyl 1-phosphate + UMP + 2 H(+). Its pathway is glycolipid biosynthesis; lipid IV(A) biosynthesis; lipid IV(A) from (3R)-3-hydroxytetradecanoyl-[acyl-carrier-protein] and UDP-N-acetyl-alpha-D-glucosamine: step 4/6. Its function is as follows. Hydrolyzes the pyrophosphate bond of UDP-2,3-diacylglucosamine to yield 2,3-diacylglucosamine 1-phosphate (lipid X) and UMP by catalyzing the attack of water at the alpha-P atom. Involved in the biosynthesis of lipid A, a phosphorylated glycolipid that anchors the lipopolysaccharide to the outer membrane of the cell. This Vibrio cholerae serotype O1 (strain ATCC 39541 / Classical Ogawa 395 / O395) protein is UDP-2,3-diacylglucosamine hydrolase.